We begin with the raw amino-acid sequence, 273 residues long: Putative pyruvate, phosphate dikinase regulatory protein 2 (273 aa).

151 to 158 (GISRTSKT) serves as a coordination point for ADP.

The protein belongs to the pyruvate, phosphate/water dikinase regulatory protein family. PDRP subfamily.

It carries out the reaction N(tele)-phospho-L-histidyl/L-threonyl-[pyruvate, phosphate dikinase] + ADP = N(tele)-phospho-L-histidyl/O-phospho-L-threonyl-[pyruvate, phosphate dikinase] + AMP + H(+). The catalysed reaction is N(tele)-phospho-L-histidyl/O-phospho-L-threonyl-[pyruvate, phosphate dikinase] + phosphate + H(+) = N(tele)-phospho-L-histidyl/L-threonyl-[pyruvate, phosphate dikinase] + diphosphate. Its function is as follows. Bifunctional serine/threonine kinase and phosphorylase involved in the regulation of the pyruvate, phosphate dikinase (PPDK) by catalyzing its phosphorylation/dephosphorylation. The chain is Putative pyruvate, phosphate dikinase regulatory protein 2 from Staphylococcus saprophyticus subsp. saprophyticus (strain ATCC 15305 / DSM 20229 / NCIMB 8711 / NCTC 7292 / S-41).